A 445-amino-acid chain; its full sequence is Disintegrin and metalloproteinase domain-containing protein 18 (445 aa).

The region spanning 1–106 (IYRKHLKYIG…LDMQCLGDLS (106 aa)) is the Peptidase M12B domain. Topologically, residues 1-409 (IYRKHLKYIG…TKRLSQHADS (409 aa)) are extracellular. Intrachain disulfides connect C18-C101, C60-C85, and C62-C67. N19 and N59 each carry an N-linked (GlcNAc...) asparagine glycan. N84 and N131 each carry an N-linked (GlcNAc...) asparagine glycan. The region spanning 113–202 (QSVCGNGIVE…HCVPDTFALD (90 aa)) is the Disintegrin domain. Residues C173 and C194 are joined by a disulfide bond. 2 N-linked (GlcNAc...) asparagine glycosylation sites follow: N333 and N340. Positions 342–376 (TGNDCNAAKKCKGNGICNNFGHCQCFPDYRPPDCN) constitute an EGF-like domain. 3 cysteine pairs are disulfide-bonded: C346-C358, C352-C364, and C366-C375. The chain crosses the membrane as a helical span at residues 410–430 (WVILGFFIFLPFIMTLFLGII). Topologically, residues 431–445 (KRNERKIVPQKEQER) are cytoplasmic.

Post-translationally, the prodomain and the metalloprotease-like domain are cleaved during the epididymal maturation of the spermatozoa. As to expression, expressed specifically in testis.

The protein resides in the membrane. Functionally, sperm surface membrane protein that may be involved in spermatogenesis and fertilization. This is a non catalytic metalloprotease-like protein. This chain is Disintegrin and metalloproteinase domain-containing protein 18 (Adam18), found in Rattus norvegicus (Rat).